A 109-amino-acid chain; its full sequence is Large ribosomal subunit protein uL24 (109 aa).

Belongs to the universal ribosomal protein uL24 family. As to quaternary structure, part of the 50S ribosomal subunit.

One of two assembly initiator proteins, it binds directly to the 5'-end of the 23S rRNA, where it nucleates assembly of the 50S subunit. Functionally, one of the proteins that surrounds the polypeptide exit tunnel on the outside of the subunit. The polypeptide is Large ribosomal subunit protein uL24 (Ehrlichia ruminantium (strain Gardel)).